The following is a 411-amino-acid chain: Inhibin beta B chain (411 aa).

The first 28 residues, 1 to 28 (MDGLPGRALGAACLLLLAAGWLGPEAWG), serve as a signal peptide directing secretion. Residues 27-69 (WGSPTPPPSPAAPPPPPPPGAPGGSQDTCTSCGGGGGGFRRPE) are disordered. Residues 29–296 (SPTPPPSPAA…GDSRHRIRKR (268 aa)) constitute a propeptide that is removed on maturation. Residues 30-47 (PTPPPSPAAPPPPPPPGA) show a composition bias toward pro residues. An N-linked (GlcNAc...) asparagine glycan is attached at N97. Intrachain disulfides connect C300–C308, C307–C376, C336–C408, and C340–C410.

This sequence belongs to the TGF-beta family. Dimeric, linked by one or more disulfide bonds. Inhibin B is a dimer of alpha and beta-B. Activin B is a homodimer of beta-B. Activin AB is a dimer of beta-A and beta-B. Interacts with FST and FSTL3. As to expression, alpha- and beta-B subunits are the predominant forms found in rat testis. Also expressed in ovary.

The protein resides in the secreted. Inhibins and activins inhibit and activate, respectively, the secretion of follitropin by the pituitary gland. Inhibins/activins are involved in regulating a number of diverse functions such as hypothalamic and pituitary hormone secretion, gonadal hormone secretion, germ cell development and maturation, erythroid differentiation, insulin secretion, nerve cell survival, embryonic axial development or bone growth, depending on their subunit composition. Inhibins appear to oppose the functions of activins. In terms of biological role, activin B is a dimer of alpha and beta-B that plays a role in several essential biological processes including embryonic development, stem cell maintenance and differentiation, haematopoiesis, cell proliferation and wound healing. Signals through type I receptor ACVR1C, abundantly expressed in pancreatic beta cells, and type II receptors like ACVR2A. Upon ligand binding, these receptors phosphorylate intracellular signaling mediators SMAD2 and SMAD3, which form a complex with SMAD4, translocate to the nucleus, and regulate gene expression. Plays a crucial role in the induction of hepcidin by inflammation through activation of ACVR1C and subsequent phosphorylation of SMAD1/5/8. Regulates adipocyte lipid metabolism by decreasing non-esterified fatty acids and glycerol release and increases intracellular triglyceride content. Stimulates wound healing by promoting cell migration and hair follicle regeneration through the JNK and ERK signaling pathways downstream of RHOA. Functionally, inhibin B is a dimer of alpha and beta-B that plays a crucial role in the regulation of the reproductive system by inhibiting the secretion of follicle-stimulating hormone (FSH) from the anterior pituitary gland. Thereby, maintains reproductive homeostasis in both males and females. Acts as a more potent suppressor of FSH release than inhibin A. Functions as competitive receptor antagonist binding activin type II receptors with high affinity in the presence of the TGF-beta type III coreceptor/TGFBR3L. The protein is Inhibin beta B chain (Inhbb) of Rattus norvegicus (Rat).